The primary structure comprises 408 residues: MQPFHTLSRILPFPDATQKAWWDKLAPMLLKAMQAQGYDTEAQYAQLGMVYKCVLPYLGQYPTVENDATRWKSFLCPYGIPIEPSLNISQGILRYAFEPIGPDVGTDKDPQNMNVIQDCLKGLTDHDDRIDTTLYAQFASRLLLTKEESQRVAATGQFTFKPGQGMHGYAVDMKGSQPMVKGYFCVGIKSAVTGIPTGKLMLDAVREVDTEGRITEPLDKLEDYYGNALGNLRLCFMSVDMIDPQDARTKLYGLQQEVSFEGLEDLWTLGGRINTPTNQEGLQLLRELWDLLQIPPGVRDIEVDHCSVGQPPKYLLPSLVNWTFLPGHSDPMPQVYLVPFGLPDAHISDALVTFFERRGWTDLARSYKSNLASYFPDVDFSQSRHVQEAISFSFRKGKPYLSVYMSLF.

Dimethylallyl diphosphate-binding residues include R94, K181, Y183, R248, K250, Y252, Q334, Y336, Y400, and Y404.

This sequence belongs to the tryptophan dimethylallyltransferase family. Homodimer.

The catalysed reaction is preechinulin + dimethylallyl diphosphate = tardioxopiperazine B + diphosphate. It catalyses the reaction preechinulin + dimethylallyl diphosphate = tardioxopiperazine A + diphosphate. The enzyme catalyses tardioxopiperazine A + dimethylallyl diphosphate = echinulin + diphosphate. It carries out the reaction tardioxopiperazine A + dimethylallyl diphosphate = variecolorin L + diphosphate. The catalysed reaction is neoechinulin A + dimethylallyl diphosphate = variecolorin G + diphosphate. It catalyses the reaction neoechinulin A + dimethylallyl diphosphate = isoechinulin A + diphosphate. The enzyme catalyses isoechinulin A + dimethylallyl diphosphate = dehydroechinulin + diphosphate. It carries out the reaction neoechinulin B + dimethylallyl diphosphate = isoechinulin B + diphosphate. The protein operates within secondary metabolite biosynthesis. It participates in alkaloid biosynthesis. Its function is as follows. Prenyltransferase; part of the gene cluster that mediates the biosynthesis of echinulin family alkaloid. The pathway begins with the biosynthesis of the cyclic dipeptide cyclo-L-Trp-L-Ala (cyclo-TA) by the NRPS criC via condensation of L-alanine and L-tryptophan. The prenyltransferase criA then catalyzes the first prenylation step, a reverse prenylation reaction at C2, to yield preechinulin. Preechinulin is the substrate of the cytochrome P450 monooxygenase criE that catalyzes the formation of the double bond between C10 and C11 to produce neoechulin A. The unique prenyltransferase criF functions as a competitive enzyme with criE for preechinulin metabolization and uses preechinulin for effective regiospecific prenylations. Preechinulin is prenylated by criF at C5 or C7. C7-prenylation leads to accumulation of tardioxopiperazine B without further modification by criF. In contrast, the C5-prenylated tardioxopiperazine A can be prenylated again by criF, predominantly at C7 to form echinulin or less frequently at C4 to give variecolorin L. CriF also accepts neoechilunin A to produce varlecolorin G (prenylation at C5) or isoechinulin A (prenylation at C7). CriF further converts isoechinulin A into dehydroechinulin. Moreover, a yet unidentified enzyme can also convert neoechilunin A into neoechilunin B by introducing a double bond between positions C14 and C17 and thus provides a further substrate to criF for C5 and C7 prenylation. The protein is Prenyltransferase criF of Aspergillus cristatus (Chinese Fuzhuan brick tea-fermentation fungus).